Consider the following 231-residue polypeptide: MTVLTDKVAVVTGAGSGIGEAIATLLHEEGAKVVLAGRNKEKLQNVANQLSQDSVKVVPTDVTNKEEVDELIKIAQQTFGGLDIVINSAGQMLSSKITDYQVDEWDSMIDVNIKGTLYTAQAALPTMLEQSSGHLINIASISGFEVTKSSTIYSATKAAVHTITQGLEKELAKTGVKVTSISPGMVDTAITAAYNPTDRKKLEPQDIAEAVLYALTQPKHVNVNEITVRPV.

10 to 34 (VVTGAGSGIGEAIATLLHEEGAKVV) contributes to the NADP(+) binding site. A substrate-binding site is contributed by S140. The Proton acceptor role is filled by Y153.

The protein belongs to the short-chain dehydrogenases/reductases (SDR) family.

This is an uncharacterized protein from Staphylococcus aureus (strain COL).